The chain runs to 177 residues: Large ribosomal subunit protein uL6 (177 aa).

The protein belongs to the universal ribosomal protein uL6 family. Part of the 50S ribosomal subunit.

This protein binds to the 23S rRNA, and is important in its secondary structure. It is located near the subunit interface in the base of the L7/L12 stalk, and near the tRNA binding site of the peptidyltransferase center. This chain is Large ribosomal subunit protein uL6, found in Allorhizobium ampelinum (strain ATCC BAA-846 / DSM 112012 / S4) (Agrobacterium vitis (strain S4)).